The primary structure comprises 432 residues: Gamma-glutamyl phosphate reductase (432 aa).

The protein belongs to the gamma-glutamyl phosphate reductase family.

The protein localises to the cytoplasm. It catalyses the reaction L-glutamate 5-semialdehyde + phosphate + NADP(+) = L-glutamyl 5-phosphate + NADPH + H(+). It participates in amino-acid biosynthesis; L-proline biosynthesis; L-glutamate 5-semialdehyde from L-glutamate: step 2/2. In terms of biological role, catalyzes the NADPH-dependent reduction of L-glutamate 5-phosphate into L-glutamate 5-semialdehyde and phosphate. The product spontaneously undergoes cyclization to form 1-pyrroline-5-carboxylate. This is Gamma-glutamyl phosphate reductase from Psychrobacter sp. (strain PRwf-1).